A 436-amino-acid polypeptide reads, in one-letter code: Elongation factor 1-gamma-A (436 aa).

The GST N-terminal domain maps to 2–87 (AGGTLYTYPD…YVGNDELRGT (86 aa)). The region spanning 88-221 (TRLHQAQVIQ…KMAQFDAKKF (134 aa)) is the GST C-terminal domain. Basic and acidic residues-rich tracts occupy residues 221 to 249 (FAEM…EKKK) and 265 to 278 (SEKA…SKDP). Positions 221 to 278 (FAEMQPKKETPKKEKPAKEPKKEKEEKKKAAPTPAPAPEDDLDESEKALAAEPKSKDP) are disordered. Positions 275 to 436 (SKDPYAHLPK…KPFNQGKIFK (162 aa)) constitute an EF-1-gamma C-terminal domain.

In terms of assembly, EF-1 is composed of four subunits: alpha, beta, delta, and gamma. Post-translationally, phosphorylated by CDK1. In terms of processing, the N-terminus is blocked.

In terms of biological role, probably plays a role in anchoring the complex to other cellular components. The sequence is that of Elongation factor 1-gamma-A (eef1g-a) from Xenopus laevis (African clawed frog).